The chain runs to 158 residues: MGQFTVVSLGLLAVFLSLSGAKGDNCPANWISRNGVCNKLFPDRKTWLEAEMYCRALKPGCHLASLHRDSDSTVLAWYISDHFKGAGHVWIGLRDTNRKRTWKWSDRTSTNYFSWNQGEPNNVQDNENCVHPWAPSGYLKWNDEPCASLHPFICQYKL.

Positions 1–23 (MGQFTVVSLGLLAVFLSLSGAKG) are cleaved as a signal peptide. Intrachain disulfides connect Cys26–Cys37, Cys54–Cys154, and Cys129–Cys146. Residues 33 to 155 (RNGVCNKLFP…CASLHPFICQ (123 aa)) form the C-type lectin domain. Residues 119 to 121 (EPN) carry the Mannose-binding motif. Ca(2+) is bound by residues Glu127, Asn142, and Asp143.

Belongs to the true venom lectin family. As to expression, expressed by the venom gland.

It localises to the secreted. Functionally, mannose-binding lectin which recognizes specific carbohydrate structures and agglutinates a variety of animal cells by binding to cell-surface glycoproteins and glycolipids. May be a calcium-dependent lectin. The polypeptide is C-type lectin lectoxin-Enh7 (Pseudoferania polylepis (Macleay's water snake)).